We begin with the raw amino-acid sequence, 98 residues long: UPF0251 protein VC0395_0048/VC395_A0084 (98 aa).

This sequence belongs to the UPF0251 family.

The chain is UPF0251 protein VC0395_0048/VC395_A0084 from Vibrio cholerae serotype O1 (strain ATCC 39541 / Classical Ogawa 395 / O395).